We begin with the raw amino-acid sequence, 554 residues long: Eukaryotic translation initiation factor 3 subunit D-2 (554 aa).

The tract at residues 291 to 305 is RNA gate; the sequence is QFDLLTVNETALEPP. A disordered region spans residues 530 to 554; that stretch reads NAFDSDGNEDEETSEDRPFLKSMAN.

It belongs to the eIF-3 subunit D family. In terms of assembly, component of the eukaryotic translation initiation factor 3 (eIF-3) complex. The eIF-3 complex interacts with pix.

It is found in the cytoplasm. Functionally, mRNA cap-binding component of the eukaryotic translation initiation factor 3 (eIF-3) complex, which is involved in protein synthesis of a specialized repertoire of mRNAs and, together with other initiation factors, stimulates binding of mRNA and methionyl-tRNAi to the 40S ribosome. The eIF-3 complex specifically targets and initiates translation of a subset of mRNAs involved in cell proliferation. In the eIF-3 complex, eif3d specifically recognizes and binds the 7-methylguanosine cap of a subset of mRNAs. The chain is Eukaryotic translation initiation factor 3 subunit D-2 from Drosophila mojavensis (Fruit fly).